The following is a 363-amino-acid chain: D-alanine--D-alanine ligase (363 aa).

Residues 148–353 (KKLLAAEGLP…YGTLVSTLIE (206 aa)) enclose the ATP-grasp domain. Position 176-231 (176-231 (RERLGLPVFVKPARAGSSIGITKVDDWAALDTAIAAAREHDPKVIVEAGIVGREVE)) interacts with ATP. 3 residues coordinate Mg(2+): aspartate 308, glutamate 320, and asparagine 322.

It belongs to the D-alanine--D-alanine ligase family. Requires Mg(2+) as cofactor. It depends on Mn(2+) as a cofactor.

It localises to the cytoplasm. It catalyses the reaction 2 D-alanine + ATP = D-alanyl-D-alanine + ADP + phosphate + H(+). Its pathway is cell wall biogenesis; peptidoglycan biosynthesis. Functionally, cell wall formation. The chain is D-alanine--D-alanine ligase from Nocardia farcinica (strain IFM 10152).